Consider the following 368-residue polypeptide: tRNA-specific 2-thiouridylase MnmA (368 aa).

ATP contacts are provided by residues 11–18 (GMSGGVDS) and Met-37. Positions 97 to 99 (NPD) are interaction with target base in tRNA. The Nucleophile role is filled by Cys-102. Cys-102 and Cys-199 are joined by a disulfide. Gly-127 contacts ATP. The tract at residues 149 to 151 (KDQ) is interaction with tRNA. The Cysteine persulfide intermediate role is filled by Cys-199. An interaction with tRNA region spans residues 311–312 (RY).

It belongs to the MnmA/TRMU family. Interacts with TusE.

The protein resides in the cytoplasm. It catalyses the reaction S-sulfanyl-L-cysteinyl-[protein] + uridine(34) in tRNA + AH2 + ATP = 2-thiouridine(34) in tRNA + L-cysteinyl-[protein] + A + AMP + diphosphate + H(+). In terms of biological role, catalyzes the 2-thiolation of uridine at the wobble position (U34) of tRNA(Lys), tRNA(Glu) and tRNA(Gln), leading to the formation of s(2)U34, the first step of tRNA-mnm(5)s(2)U34 synthesis. Sulfur is provided by IscS, via a sulfur-relay system. Binds ATP and its substrate tRNAs. This chain is tRNA-specific 2-thiouridylase MnmA, found in Salmonella paratyphi B (strain ATCC BAA-1250 / SPB7).